Here is an 874-residue protein sequence, read N- to C-terminus: Probable inorganic carbon transporter subunit DabA (874 aa).

C398, D400, H580, and C595 together coordinate Zn(2+).

Belongs to the inorganic carbon transporter (TC 9.A.2) DabA family. In terms of assembly, forms a complex with DabB. Zn(2+) serves as cofactor.

It localises to the cell membrane. Part of an energy-coupled inorganic carbon pump. This chain is Probable inorganic carbon transporter subunit DabA, found in Bacillus thuringiensis subsp. konkukian (strain 97-27).